Here is a 198-residue protein sequence, read N- to C-terminus: MSAPRIGVLALQGDTREHLAALREAGAESMPVRRRGELEAVDGLVIPGGESTTMSHLLKDLDLLEPLRGLLADGLPAYGACAGMILLASEILDAGAGGREALPLRAIDMTVRRNAFGRQVDSFEGDIAFAGLDVPVRAVFIRAPWVERAGDGVEVLARAAGHVVAVRQGARLATAFHPEMTGDRRIHRLFVDLVTGVV.

49–51 is a binding site for L-glutamine; the sequence is GES. Residue cysteine 81 is the Nucleophile of the active site. L-glutamine-binding positions include arginine 113 and 141–142; that span reads IR. Active-site charge relay system residues include histidine 177 and glutamate 179.

This sequence belongs to the glutaminase PdxT/SNO family. In the presence of PdxS, forms a dodecamer of heterodimers. Only shows activity in the heterodimer.

The catalysed reaction is aldehydo-D-ribose 5-phosphate + D-glyceraldehyde 3-phosphate + L-glutamine = pyridoxal 5'-phosphate + L-glutamate + phosphate + 3 H2O + H(+). It carries out the reaction L-glutamine + H2O = L-glutamate + NH4(+). The protein operates within cofactor biosynthesis; pyridoxal 5'-phosphate biosynthesis. In terms of biological role, catalyzes the hydrolysis of glutamine to glutamate and ammonia as part of the biosynthesis of pyridoxal 5'-phosphate. The resulting ammonia molecule is channeled to the active site of PdxS. This chain is Pyridoxal 5'-phosphate synthase subunit PdxT, found in Mycobacterium avium (strain 104).